A 590-amino-acid chain; its full sequence is UvrABC system protein C (590 aa).

The region spanning 14–91 (DQPGCYLMKD…IKKYDPKYNV (78 aa)) is the GIY-YIG domain. The 36-residue stretch at 196–231 (QQIKKELTEKMQEAAEQLEFERAKELRDQIAYIDST) folds into the UVR domain.

It belongs to the UvrC family. In terms of assembly, interacts with UvrB in an incision complex.

The protein localises to the cytoplasm. The UvrABC repair system catalyzes the recognition and processing of DNA lesions. UvrC both incises the 5' and 3' sides of the lesion. The N-terminal half is responsible for the 3' incision and the C-terminal half is responsible for the 5' incision. This Bacillus pumilus (strain SAFR-032) protein is UvrABC system protein C.